The chain runs to 254 residues: Aquaporin TIP1-2 (254 aa).

2 consecutive transmembrane segments (helical) span residues 24–44 (VAEF…GMAF) and 56–76 (AGLI…VSVG). Residues 85 to 87 (NPA) carry the NPA 1 motif. The next 3 membrane-spanning stretches (helical) occupy residues 103–123 (ALVY…LLKI), 144–164 (AVVL…ATAV), and 173–193 (VIAP…GGAF). The NPA 2 motif lies at 199 to 201 (NPA). The chain crosses the membrane as a helical span at residues 220 to 240 (WVGPLAGAAIAALVYDIIFIG).

Belongs to the MIP/aquaporin (TC 1.A.8) family. TIP (TC 1.A.8.10) subfamily.

The protein resides in the vacuole membrane. Aquaporins facilitate the transport of water and small neutral solutes across cell membranes. The sequence is that of Aquaporin TIP1-2 (TIP1-2) from Zea mays (Maize).